Here is a 480-residue protein sequence, read N- to C-terminus: Adenylosuccinate synthetase, chloroplastic (480 aa).

Residues 1–54 (MATARVMVADRARAFGGTTATRARRDDQGRRVTIARGIPSRARVVVARASERAY) constitute a chloroplast transit peptide. Residues 69-75 (GDEGKGK) and 97-99 (GHT) each bind GTP. Asp-70 functions as the Proton acceptor in the catalytic mechanism. 2 residues coordinate Mg(2+): Asp-70 and Gly-97. IMP is bound by residues 70 to 73 (DEGK), 95 to 98 (NAGH), Thr-187, Arg-201, Asn-278, Thr-293, and Arg-357. The active-site Proton donor is His-98. 353-359 (TTTGRPR) contributes to the substrate binding site. GTP contacts are provided by residues Arg-359, 385–387 (KLD), and 468–470 (GVG).

The protein belongs to the adenylosuccinate synthetase family. As to quaternary structure, homodimer. Mg(2+) serves as cofactor.

It is found in the plastid. The protein localises to the chloroplast. The enzyme catalyses IMP + L-aspartate + GTP = N(6)-(1,2-dicarboxyethyl)-AMP + GDP + phosphate + 2 H(+). It participates in purine metabolism; AMP biosynthesis via de novo pathway; AMP from IMP: step 1/2. Plays an important role in the de novo pathway and in the salvage pathway of purine nucleotide biosynthesis. Catalyzes the first committed step in the biosynthesis of AMP from IMP. The protein is Adenylosuccinate synthetase, chloroplastic of Ostreococcus tauri.